Reading from the N-terminus, the 331-residue chain is Olfactory receptor 6K3 (331 aa).

The Extracellular segment spans residues 1-41; sequence MCWTMPSPFTGSSTRNMESGNQSTVTEFIFTGFPQLQDGSL. Asparagine 21 is a glycosylation site (N-linked (GlcNAc...) asparagine). The helical transmembrane segment at 42–62 threads the bilayer; that stretch reads LYFFPLLFIYTFIIIDNLLIF. The Cytoplasmic portion of the chain corresponds to 63 to 70; the sequence is SAVRLDTH. Residues 71 to 91 traverse the membrane as a helical segment; it reads LHNPMYNFISIFSFLEIWYTT. The Extracellular segment spans residues 92 to 115; the sequence is ATIPKMLSNLISEKKAISMTGCIL. A disulfide bond links cysteine 113 and cysteine 205. A helical membrane pass occupies residues 116–136; sequence QMYFFHSLENSEGILLTTMAI. At 137 to 155 the chain is on the cytoplasmic side; that stretch reads DRYVAICNPLRYQMIMTPR. Residues 156–176 traverse the membrane as a helical segment; it reads LCAQLSAGSCLFGFLILLPEI. Over 177 to 212 the chain is Extracellular; the sequence is VMISTLPFCGPNQIHQIFCDLVPVLSLACTDTSMIL. A helical transmembrane segment spans residues 213 to 232; sequence IEDVIHAVTIIITFLIIALS. Residues 233 to 252 lie on the Cytoplasmic side of the membrane; it reads YVRIVTVILRIPSSEGRQKA. The helical transmembrane segment at 253–273 threads the bilayer; it reads FSTCAGHLMVFPIFFGSVSLM. Topologically, residues 274-286 are extracellular; the sequence is YLRFSDTYPPVLD. A helical transmembrane segment spans residues 287-307; sequence TAIALMFTVLAPFFNPIIYSL. The Cytoplasmic segment spans residues 308–331; the sequence is RNKDMNNAIKKLFCLQKVLNKPGG.

It belongs to the G-protein coupled receptor 1 family.

It is found in the cell membrane. Odorant receptor. This is Olfactory receptor 6K3 (OR6K3) from Homo sapiens (Human).